A 353-amino-acid chain; its full sequence is Putative glycosyltransferase TagX (353 aa).

It belongs to the glycosyltransferase 2 family.

In Staphylococcus aureus (strain MSSA476), this protein is Putative glycosyltransferase TagX (tagX).